The following is a 359-amino-acid chain: 4-hydroxy-3-methylbut-2-en-1-yl diphosphate synthase (flavodoxin) (359 aa).

[4Fe-4S] cluster contacts are provided by Cys-264, Cys-267, Cys-299, and Glu-306.

It belongs to the IspG family. The cofactor is [4Fe-4S] cluster.

The enzyme catalyses (2E)-4-hydroxy-3-methylbut-2-enyl diphosphate + oxidized [flavodoxin] + H2O + 2 H(+) = 2-C-methyl-D-erythritol 2,4-cyclic diphosphate + reduced [flavodoxin]. It functions in the pathway isoprenoid biosynthesis; isopentenyl diphosphate biosynthesis via DXP pathway; isopentenyl diphosphate from 1-deoxy-D-xylulose 5-phosphate: step 5/6. Functionally, converts 2C-methyl-D-erythritol 2,4-cyclodiphosphate (ME-2,4cPP) into 1-hydroxy-2-methyl-2-(E)-butenyl 4-diphosphate. The protein is 4-hydroxy-3-methylbut-2-en-1-yl diphosphate synthase (flavodoxin) of Helicobacter pylori (strain HPAG1).